A 253-amino-acid chain; its full sequence is CD151 antigen (253 aa).

The Cytoplasmic segment spans residues 1–18; it reads MGEFNEKKATCGTVCLKY. 2 S-palmitoyl cysteine lipidation sites follow: Cys11 and Cys15. A helical transmembrane segment spans residues 19 to 39; sequence LLFTYNCCFWLAGLAVMAVGI. Residues 40-57 are Extracellular-facing; that stretch reads WTLALKSDYISLLASSTY. The chain crosses the membrane as a helical span at residues 58 to 78; sequence LATAYILVVAGVVVMVTGVLG. Topologically, residues 79–91 are cytoplasmic; that stretch reads CCATFKERRNLLR. The helical transmembrane segment at 92 to 112 threads the bilayer; that stretch reads LYFILLLIIFLLEIIAGILAY. At 113–221 the chain is on the extracellular side; that stretch reads VYYQQLNTEL…LETFIQEHLR (109 aa). N-linked (GlcNAc...) asparagine glycosylation is present at Asn159. The helical transmembrane segment at 222 to 242 threads the bilayer; the sequence is VIGAVGIGIACVQVFGMIFTC. Residues Cys242 and Cys243 are each lipidated (S-palmitoyl cysteine). Over 243–253 the chain is Cytoplasmic; it reads CLYRSLKLEHY.

It belongs to the tetraspanin (TM4SF) family. Interacts with integrins ITGA3:ITGB1, ITGA5:ITGB1, ITGA3:ITGB1 and ITGA6:ITGB4 and with CD9 and CD181. Interacts (via the second extracellular domain) with integrin ITGAV:ITGB3. Interacts with ITGA3; this interaction modulates ITGA3 glycosylation pattern. Interacts with F11R. Interacts with RAC1 and CDC42; these interactions mediate physical association of RAC1 and CDC42 with integrin adhesion receptor complexes. Post-translationally, palmitoylated. Palmitoylation by ZDHHC2 regulates CD151 expression, association with other tetraspanin family proteins and function in cell adhesion. In terms of processing, ubiquitinated by RNF128 on lysine residues present in the tetraspanin amino terminus via 'Lys-48'-linked ubiquitin leading to proteasomal degradation.

Its subcellular location is the cell membrane. Structural component of specialized membrane microdomains known as tetraspanin-enriched microdomains (TERMs), which act as platforms for receptor clustering and signaling. Plays a role in various cellular and molecular mechanism through its association with both integrin and non-integrin proteins. These interactions facilitate critical cellular functions, including cell-to-cell communication, wound healing, platelet aggregation, trafficking, cell motility, and angiogenesis. Via interaction with JAM-A/F11R and integrin ITGA3:ITGB1, promotes the recruitment of signaling molecules such as RAC1, CDC42 and RhoGTPases to facilitate the polarization of epithelial cells and the reorganization of the actin cytoskeleton, which are critical steps in cell migration process. Regulates the glycosylation pattern of ITGA3:ITGB1 thereby modulating its activity. Plays an essential role in the maintenance of central laminin-binding integrin ITGA6:ITGB4-containing adhesion complexes. Essential for the proper assembly of the glomerular and tubular basement membranes in kidney. Contributes to T-cell activation by modulating integrin signaling leading to activation of downstream targets PTK2 and MAPK1/MAPK3. The sequence is that of CD151 antigen (Cd151) from Mus musculus (Mouse).